The following is a 195-amino-acid chain: Obelin (195 aa).

The propeptide occupies 1-6 (MASKYA). EF-hand domains are found at residues 17–52 (KWIKRHKFMFDYLDINGNGQITLDEIVSKASDDICK), 53–88 (NLGATPAQTQRHQDCVEAFFRGCGLEYGKETKFPEF), 110–145 (LIREWGDAVFDIFDKDGSGTITLDEWKAYGRISGIS), and 146–181 (PSEEDCEKTFQHCDLDNSGELDVDEMTRQHLGFWYT). 5 residues coordinate Ca(2+): aspartate 30, asparagine 32, asparagine 34, glutamine 36, and glutamate 41. The Ca(2+) site is built by aspartate 123, aspartate 125, serine 127, threonine 129, glutamate 134, aspartate 159, aspartate 161, serine 163, glutamate 165, and glutamate 170.

Belongs to the aequorin family.

Functionally, ca(2+)-dependent bioluminescence photoprotein. Displays an emission peak at 495 nm (blue light). Trace amounts of calcium ion trigger the intramolecular oxidation of the chromophore, coelenterazine into coelenteramide and CO(2) with the concomitant emission of light. This chain is Obelin, found in Obelia geniculata (Knotted thread hydroid).